A 515-amino-acid chain; its full sequence is Maturase K (515 aa).

It belongs to the intron maturase 2 family. MatK subfamily.

Its subcellular location is the plastid. It localises to the chloroplast. In terms of biological role, usually encoded in the trnK tRNA gene intron. Probably assists in splicing its own and other chloroplast group II introns. The chain is Maturase K from Pinus halepensis (Aleppo pine).